A 347-amino-acid polypeptide reads, in one-letter code: Selenide, water dikinase (347 aa).

Residue Cys17 is part of the active site. ATP contacts are provided by residues Lys20 and 48-50 (TRD). A Mg(2+)-binding site is contributed by Asp51. ATP-binding positions include Asp68, Asp91, and 139 to 141 (GHS). Residue Asp91 participates in Mg(2+) binding. Asp227 is a Mg(2+) binding site.

This sequence belongs to the selenophosphate synthase 1 family. Class I subfamily. In terms of assembly, homodimer. It depends on Mg(2+) as a cofactor.

The enzyme catalyses hydrogenselenide + ATP + H2O = selenophosphate + AMP + phosphate + 2 H(+). Its function is as follows. Synthesizes selenophosphate from selenide and ATP. The polypeptide is Selenide, water dikinase (Escherichia coli O157:H7).